We begin with the raw amino-acid sequence, 418 residues long: Tyrosine--tRNA ligase (418 aa).

Y34 lines the L-tyrosine pocket. The 'HIGH' region signature appears at 39 to 48 (PTADSLHLGH). Y169 and Q173 together coordinate L-tyrosine. A 'KMSKS' region motif is present at residues 229-233 (KFGKS). K232 lines the ATP pocket. In terms of domain architecture, S4 RNA-binding spans 352-418 (NNIVELLVSS…GKKKYFVLTY (67 aa)).

Belongs to the class-I aminoacyl-tRNA synthetase family. TyrS type 1 subfamily. Homodimer.

It localises to the cytoplasm. It catalyses the reaction tRNA(Tyr) + L-tyrosine + ATP = L-tyrosyl-tRNA(Tyr) + AMP + diphosphate + H(+). Its function is as follows. Catalyzes the attachment of tyrosine to tRNA(Tyr) in a two-step reaction: tyrosine is first activated by ATP to form Tyr-AMP and then transferred to the acceptor end of tRNA(Tyr). In Streptococcus pneumoniae serotype 19F (strain G54), this protein is Tyrosine--tRNA ligase.